A 267-amino-acid chain; its full sequence is Exodeoxyribonuclease III (267 aa).

Mg(2+) is bound at residue Glu34. Tyr109 is a catalytic residue. Mg(2+)-binding residues include Asp151, Asn153, and Asp258. Catalysis depends on Asp151, which acts as the Proton donor/acceptor.

This sequence belongs to the DNA repair enzymes AP/ExoA family. Monomer. Requires Mg(2+) as cofactor. Mn(2+) is required as a cofactor.

The catalysed reaction is Exonucleolytic cleavage in the 3'- to 5'-direction to yield nucleoside 5'-phosphates.. Functionally, major apurinic-apyrimidinic endonuclease of E.coli. It removes the damaged DNA at cytosines and guanines by cleaving on the 3'-side of the AP site by a beta-elimination reaction. The chain is Exodeoxyribonuclease III (xthA) from Haemophilus influenzae (strain ATCC 51907 / DSM 11121 / KW20 / Rd).